A 157-amino-acid chain; its full sequence is Small ribosomal subunit protein uS7 (157 aa).

It belongs to the universal ribosomal protein uS7 family. In terms of assembly, part of the 30S ribosomal subunit. Contacts proteins S9 and S11.

Functionally, one of the primary rRNA binding proteins, it binds directly to 16S rRNA where it nucleates assembly of the head domain of the 30S subunit. Is located at the subunit interface close to the decoding center, probably blocks exit of the E-site tRNA. This Desulfotalea psychrophila (strain LSv54 / DSM 12343) protein is Small ribosomal subunit protein uS7.